The primary structure comprises 86 residues: Protein Tat (86 aa).

Residues 1–24 are interaction with human CREBBP; that stretch reads MEPVDPRLEPWKHPGSQPKTACTN. The transactivation stretch occupies residues 1–48; it reads MEPVDPRLEPWKHPGSQPKTACTNCYCKKCCFHCQVCFITKALGISYG. 3 residues coordinate Zn(2+): cysteine 22, cysteine 25, and cysteine 27. The interval 22 to 37 is cysteine-rich; the sequence is CTNCYCKKCCFHCQVC. Lysine 28 carries the post-translational modification N6-acetyllysine; by host PCAF. Zn(2+) contacts are provided by cysteine 30, histidine 33, cysteine 34, and cysteine 37. The interval 38-48 is core; it reads FITKALGISYG. Residues 48–58 show a composition bias toward basic residues; the sequence is GRKKRRQRRRA. The segment at 48–86 is disordered; that stretch reads GRKKRRQRRRAPQGSQTHQVSLSKQPTSQSRGDPTGPKE. Positions 49 to 57 match the Nuclear localization signal, RNA-binding (TAR), and protein transduction motif; it reads RKKRRQRRR. Positions 49–86 are interaction with the host capping enzyme RNGTT; it reads RKKRRQRRRAPQGSQTHQVSLSKQPTSQSRGDPTGPKE. 2 positions are modified to N6-acetyllysine; by host EP300 and GCN5L2: lysine 50 and lysine 51. Arginine 52 and arginine 53 each carry asymmetric dimethylarginine; by host PRMT6. The segment covering 60 to 79 has biased composition (polar residues); it reads QGSQTHQVSLSKQPTSQSRG. A Glycyl lysine isopeptide (Lys-Gly) (interchain with G-Cter in ubiquitin) cross-link involves residue lysine 71. The Cell attachment site signature appears at 78-80; sequence RGD.

This sequence belongs to the lentiviruses Tat family. In terms of assembly, interacts with host CCNT1. Associates with the P-TEFb complex composed at least of Tat, P-TEFb (CDK9 and CCNT1), TAR RNA, RNA Pol II. Recruits the HATs CREBBP, TAF1/TFIID, EP300, PCAF and GCN5L2. Interacts with host KAT5/Tip60; this interaction targets the latter to degradation. Interacts with the host deacetylase SIRT1. Interacts with host capping enzyme RNGTT; this interaction stimulates RNGTT. Binds to host KDR, and to the host integrins ITGAV/ITGB3 and ITGA5/ITGB1. Interacts with host KPNB1/importin beta-1 without previous binding to KPNA1/importin alpha-1. Interacts with EIF2AK2. Interacts with host nucleosome assembly protein NAP1L1; this interaction may be required for the transport of Tat within the nucleus, since the two proteins interact at the nuclear rim. Interacts with host C1QBP/SF2P32; this interaction involves lysine-acetylated Tat. Interacts with the host chemokine receptors CCR2, CCR3 and CXCR4. Interacts with host DPP4/CD26; this interaction may trigger an anti-proliferative effect. Interacts with host LDLR. Interacts with the host extracellular matrix metalloproteinase MMP1. Interacts with host PRMT6; this interaction mediates Tat's methylation. Interacts with, and is ubiquitinated by MDM2/Hdm2. Interacts with host PSMC3 and HTATIP2. Interacts with STAB1; this interaction may overcome SATB1-mediated repression of IL2 and IL2RA (interleukin) in T cells by binding to the same domain than HDAC1. Interacts (when acetylated) with human CDK13, thereby increasing HIV-1 mRNA splicing and promoting the production of the doubly spliced HIV-1 protein Nef. Interacts with host TBP; this interaction modulates the activity of transcriptional pre-initiation complex. Interacts with host RELA. Interacts with host PLSCR1; this interaction negatively regulates Tat transactivation activity by altering its subcellular distribution. In terms of processing, asymmetrical arginine methylation by host PRMT6 seems to diminish the transactivation capacity of Tat and affects the interaction with host CCNT1. Post-translationally, acetylation by EP300, CREBBP, GCN5L2/GCN5 and PCAF regulates the transactivation activity of Tat. EP300-mediated acetylation of Lys-50 promotes dissociation of Tat from the TAR RNA through the competitive binding to PCAF's bromodomain. In addition, the non-acetylated Tat's N-terminus can also interact with PCAF. PCAF-mediated acetylation of Lys-28 enhances Tat's binding to CCNT1. Lys-50 is deacetylated by SIRT1. Polyubiquitination by host MDM2 does not target Tat to degradation, but activates its transactivation function and fosters interaction with CCNT1 and TAR RNA. In terms of processing, phosphorylated by EIF2AK2 on serine and threonine residues adjacent to the basic region important for TAR RNA binding and function. Phosphorylation of Tat by EIF2AK2 is dependent on the prior activation of EIF2AK2 by dsRNA.

It localises to the host nucleus. The protein localises to the host nucleolus. The protein resides in the host cytoplasm. It is found in the secreted. Functionally, transcriptional activator that increases RNA Pol II processivity, thereby increasing the level of full-length viral transcripts. Recognizes a hairpin structure at the 5'-LTR of the nascent viral mRNAs referred to as the transactivation responsive RNA element (TAR) and recruits the cyclin T1-CDK9 complex (P-TEFb complex) that will in turn hyperphosphorylate the RNA polymerase II to allow efficient elongation. The CDK9 component of P-TEFb and other Tat-activated kinases hyperphosphorylate the C-terminus of RNA Pol II that becomes stabilized and much more processive. Other factors such as HTATSF1/Tat-SF1, SUPT5H/SPT5, and HTATIP2 are also important for Tat's function. Besides its effect on RNA Pol II processivity, Tat induces chromatin remodeling of proviral genes by recruiting the histone acetyltransferases (HATs) CREBBP, EP300 and PCAF to the chromatin. This also contributes to the increase in proviral transcription rate, especially when the provirus integrates in transcriptionally silent region of the host genome. To ensure maximal activation of the LTR, Tat mediates nuclear translocation of NF-kappa-B by interacting with host RELA. Through its interaction with host TBP, Tat may also modulate transcription initiation. Tat can reactivate a latently infected cell by penetrating in it and transactivating its LTR promoter. In the cytoplasm, Tat is thought to act as a translational activator of HIV-1 mRNAs. In terms of biological role, extracellular circulating Tat can be endocytosed by surrounding uninfected cells via the binding to several surface receptors such as CD26, CXCR4, heparan sulfate proteoglycans (HSPG) or LDLR. Neurons are rarely infected, but they internalize Tat via their LDLR. Through its interaction with nuclear HATs, Tat is potentially able to control the acetylation-dependent cellular gene expression. Modulates the expression of many cellular genes involved in cell survival, proliferation or in coding for cytokines or cytokine receptors. Tat plays a role in T-cell and neurons apoptosis. Tat induced neurotoxicity and apoptosis probably contribute to neuroAIDS. Circulating Tat also acts as a chemokine-like and/or growth factor-like molecule that binds to specific receptors on the surface of the cells, affecting many cellular pathways. In the vascular system, Tat binds to ITGAV/ITGB3 and ITGA5/ITGB1 integrins dimers at the surface of endothelial cells and competes with bFGF for heparin-binding sites, leading to an excess of soluble bFGF. The protein is Protein Tat of Human immunodeficiency virus type 1 group M subtype B (isolate PCV12) (HIV-1).